Consider the following 346-residue polypeptide: S-adenosylmethionine:tRNA ribosyltransferase-isomerase (346 aa).

This sequence belongs to the QueA family. In terms of assembly, monomer.

Its subcellular location is the cytoplasm. It catalyses the reaction 7-aminomethyl-7-carbaguanosine(34) in tRNA + S-adenosyl-L-methionine = epoxyqueuosine(34) in tRNA + adenine + L-methionine + 2 H(+). The protein operates within tRNA modification; tRNA-queuosine biosynthesis. In terms of biological role, transfers and isomerizes the ribose moiety from AdoMet to the 7-aminomethyl group of 7-deazaguanine (preQ1-tRNA) to give epoxyqueuosine (oQ-tRNA). This chain is S-adenosylmethionine:tRNA ribosyltransferase-isomerase, found in Shewanella frigidimarina (strain NCIMB 400).